Reading from the N-terminus, the 382-residue chain is uncharacterized protein (382 aa).

12 consecutive transmembrane segments (helical) span residues 8-28 (VMLL…LNTL), 45-65 (MVSS…GYLI), 75-95 (YLAS…VGFW), 102-122 (FIAG…LMCS), 131-151 (LLAA…LLVS), 157-177 (LLHV…PLLF), 204-224 (LGVN…GLMP), 231-251 (GMAN…GILG), 270-290 (VQVF…AMAP), 291-311 (ALFI…AWAC), 325-345 (ALLL…AMLM), and 349-369 (SDNL…LMLL).

The protein belongs to the major facilitator superfamily. YcaD (TC 2.A.1.26) family.

It is found in the cell inner membrane. This is an uncharacterized protein from Salmonella newport (strain SL254).